The following is a 675-amino-acid chain: DNA ligase (675 aa).

NAD(+)-binding positions include 33–37 (DAEYD), 82–83 (SL), and E115. K117 functions as the N6-AMP-lysine intermediate in the catalytic mechanism. NAD(+) contacts are provided by R138, E175, K293, and K317. Positions 411, 414, 429, and 435 each coordinate Zn(2+). The BRCT domain maps to 594-675 (IADNPLKDKT…LIGYFTTIVS (82 aa)).

It belongs to the NAD-dependent DNA ligase family. LigA subfamily. The cofactor is Mg(2+). It depends on Mn(2+) as a cofactor.

It catalyses the reaction NAD(+) + (deoxyribonucleotide)n-3'-hydroxyl + 5'-phospho-(deoxyribonucleotide)m = (deoxyribonucleotide)n+m + AMP + beta-nicotinamide D-nucleotide.. In terms of biological role, DNA ligase that catalyzes the formation of phosphodiester linkages between 5'-phosphoryl and 3'-hydroxyl groups in double-stranded DNA using NAD as a coenzyme and as the energy source for the reaction. It is essential for DNA replication and repair of damaged DNA. This chain is DNA ligase, found in Glaesserella parasuis serovar 5 (strain SH0165) (Haemophilus parasuis).